We begin with the raw amino-acid sequence, 289 residues long: tRNA dimethylallyltransferase (289 aa).

Position 9–16 (G9–T16) interacts with ATP. T11 to T16 lines the substrate pocket. Positions D34–C37 are interaction with substrate tRNA.

It belongs to the IPP transferase family. Monomer. Requires Mg(2+) as cofactor.

It carries out the reaction adenosine(37) in tRNA + dimethylallyl diphosphate = N(6)-dimethylallyladenosine(37) in tRNA + diphosphate. In terms of biological role, catalyzes the transfer of a dimethylallyl group onto the adenine at position 37 in tRNAs that read codons beginning with uridine, leading to the formation of N6-(dimethylallyl)adenosine (i(6)A). In Campylobacter jejuni (strain RM1221), this protein is tRNA dimethylallyltransferase.